The chain runs to 254 residues: Ferritin, chloroplastic (254 aa).

Residues 1 to 48 (MALAPSKVSPFSGFSLSDGVGAVRNPTCSVSLSFLNKKVGSRNLGVSA) constitute a chloroplast transit peptide. The extension peptide (EP) stretch occupies residues 49 to 81 (STVPLTGVIFEPFEEVKKEELAVPTAGQVSLAR). The Ferritin-like diiron domain maps to 82–235 (QYYADECESA…EYVAQLRMVG (154 aa)). Glu99, Glu134, His137, Glu183, and Gln217 together coordinate Fe cation.

The protein belongs to the ferritin family. Oligomer of 24 subunits. There are two types of subunits: L (light) chain and H (heavy) chain. The major chain can be light or heavy, depending on the species and tissue type. The functional molecule forms a roughly spherical shell with a diameter of 12 nm and contains a central cavity into which the insoluble mineral iron core is deposited.

It localises to the plastid. The protein resides in the chloroplast. The enzyme catalyses 4 Fe(2+) + O2 + 4 H(+) = 4 Fe(3+) + 2 H2O. Stores iron in a soluble, non-toxic, readily available form. Important for iron homeostasis. Has ferroxidase activity. Iron is taken up in the ferrous form and deposited as ferric hydroxides after oxidation. The polypeptide is Ferritin, chloroplastic (PFE) (Phaseolus vulgaris (Kidney bean)).